The primary structure comprises 268 residues: Gasdermin bGSDM (268 aa).

Cys3 carries the S-palmitoyl cysteine lipid modification. A run of 4 beta stranded transmembrane segments spans residues 78–94, 103–121, 168–185, and 195–211; these read IDLR…AAKI, APSF…FHIE, KMRM…GVDV, and AKLE…RLVF. Positions 248–268 are C-terminal region; sequence GENMALNLFTEIQDAGFIEVT.

The protein belongs to the bacterial gasdermin family. Monomer in solution. In terms of assembly, forms large, homooligomeric ring-shaped pores when inserted in membranes. Post-translationally, cleavage by the adjacently encoded protease (G563DRAFT_02009) between Leu-247 and Gly-248 relieves autoinhibition, releasing the N-terminus which initiates loss of cell integrity. In terms of processing, palmitoylation helps stabilize the inactive state; may self-palmitoylate. Palmitoylation is not required for permeabilization of liposomes by the ring-like pores in vitro. Palmitoylation plays a significant role in pore formation.

Its subcellular location is the cytoplasm. The protein localises to the cell inner membrane. With respect to regulation, the full-length protein before cleavage is inactive: intramolecular interactions between the N-terminal domain and the C-terminal region, as well as the lipid modification, mediate autoinhibition. The pyroptosis-like-inducing activity is carried by the released N-terminal domain (gasdermin bGSDM, N-terminus). Functionally, precursor of a pore-forming protein involved in defense against bacteriophages. Cleavage of this precursor by its dedicated, neighboring protease (G563DRAFT_02009) releases the active moiety (gasdermin bGSDM, N-terminus) which inserts into membranes, forming pores and triggering cell death. Expression of bGSDM and its protease is highly toxic in E.coli. Cells expressing the gene pair stop dividing and lose membrane integrity. Both proteins are required to kill E.coli. Its function is as follows. Pore-forming protein that causes membrane permeabilization via a pyroptosis-like activity. Makes ring-like pores with walls about 50 Angstroms thick and an interior pore diameter of 200-300 Angstroms, when integrated in liposomes. The polypeptide is Gasdermin bGSDM (Runella zeae (strain ATCC BAA-293 / DSM 19591 / LMG 21438 / NS12)).